Here is a 309-residue protein sequence, read N- to C-terminus: Uridylate-specific endoribonuclease C (309 aa).

The N-terminal stretch at Met1–Ala22 is a signal peptide. An EndoU domain is found at Val27–Ser303. Residues Asn53 and Asn121 are each glycosylated (N-linked (GlcNAc...) asparagine). Active-site residues include His181, His197, and Lys242.

This sequence belongs to the ENDOU family. As to quaternary structure, monomer. Mn(2+) is required as a cofactor.

The protein localises to the secreted. The catalysed reaction is ribonucleotidyl-uridine-RNA = a 5'-end dephospho-uridine-RNA + a 3'-end 2',3'-cyclophospho-ribonucleotide-RNA. Its function is as follows. Endoribonuclease that cleaves single-stranded RNAs at 5' of uridylates and releases a product with a 2',3'-cyclic phosphate at the 3'-end. The UU and GU sites are more efficiently cleaved than CU and AU sites. The protein is Uridylate-specific endoribonuclease C (endouc) of Danio rerio (Zebrafish).